A 119-amino-acid chain; its full sequence is Phosphoribosyl-AMP cyclohydrolase (119 aa).

Residue aspartate 72 participates in Mg(2+) binding. Residue cysteine 73 coordinates Zn(2+). Mg(2+)-binding residues include aspartate 74 and aspartate 76. Residues cysteine 89 and cysteine 96 each contribute to the Zn(2+) site.

This sequence belongs to the PRA-CH family. As to quaternary structure, homodimer. Mg(2+) serves as cofactor. Zn(2+) is required as a cofactor.

It is found in the cytoplasm. The enzyme catalyses 1-(5-phospho-beta-D-ribosyl)-5'-AMP + H2O = 1-(5-phospho-beta-D-ribosyl)-5-[(5-phospho-beta-D-ribosylamino)methylideneamino]imidazole-4-carboxamide. It functions in the pathway amino-acid biosynthesis; L-histidine biosynthesis; L-histidine from 5-phospho-alpha-D-ribose 1-diphosphate: step 3/9. Functionally, catalyzes the hydrolysis of the adenine ring of phosphoribosyl-AMP. In Methanocella arvoryzae (strain DSM 22066 / NBRC 105507 / MRE50), this protein is Phosphoribosyl-AMP cyclohydrolase.